The primary structure comprises 116 residues: G antigen 10 (116 aa).

The tract at residues 1–116 is disordered; that stretch reads MSWRGRSTYR…PEEGEKQSQC (116 aa). Acidic residues predominate over residues 31–44; that stretch reads FSDEVEPATPEEGE. Composition is skewed to basic and acidic residues over residues 71 to 80 and 102 to 116; these read PEADSQEQVH and EEVKRPEEGEKQSQC.

Belongs to the GAGE family.

This Homo sapiens (Human) protein is G antigen 10 (GAGE10).